The sequence spans 80 residues: Exodeoxyribonuclease 7 small subunit (80 aa).

The protein belongs to the XseB family. As to quaternary structure, heterooligomer composed of large and small subunits.

The protein resides in the cytoplasm. It catalyses the reaction Exonucleolytic cleavage in either 5'- to 3'- or 3'- to 5'-direction to yield nucleoside 5'-phosphates.. In terms of biological role, bidirectionally degrades single-stranded DNA into large acid-insoluble oligonucleotides, which are then degraded further into small acid-soluble oligonucleotides. The polypeptide is Exodeoxyribonuclease 7 small subunit (Pseudomonas fluorescens (strain Pf0-1)).